We begin with the raw amino-acid sequence, 729 residues long: Oligopeptide transporter 4 (729 aa).

N-acetylalanine is present on alanine 2. Position 8 is a phosphoserine (serine 8). 16 helical membrane-spanning segments follow: residues 37 to 57 (MWFL…FFSY), 61 to 81 (PLVI…HFLA), 123 to 143 (AFGS…AFYG), 148 to 168 (FIAG…WAGL), 177 to 194 (AHMW…FRAL), 207 to 227 (FFVI…YLFT), 256 to 276 (GLGA…SPLI), 279 to 299 (FFAI…VLPL), 352 to 372 (LSMF…STLT), 410 to 430 (WWFY…CVFL), 438 to 458 (WWGL…ISII), 522 to 542 (FLVQ…VAWW), 592 to 612 (YAAM…VWSL), 621 to 637 (WIPL…TAMM), 640 to 660 (ATAV…LFVF), and 673 to 693 (VLSA…YFSV).

The protein belongs to the oligopeptide OPT transporter (TC 2.A.67.1) family. As to expression, expressed in flowers, leaves, roots, and stems.

Its subcellular location is the membrane. Its function is as follows. Involved in the translocation of tetra- and pentapeptides across the cellular membrane in an energy-dependent manner. In Arabidopsis thaliana (Mouse-ear cress), this protein is Oligopeptide transporter 4 (OPT4).